The following is a 72-amino-acid chain: KFIRHKDESFYECGQLIGYQQYCVNACQAHGSKEKGYCKGMAPFGLPGGCYCPKLPSNRVKMCFGALESKCA.

Residues 1–72 (KFIRHKDESF…CFGALESKCA (72 aa)) form the LCN-type CS-alpha/beta domain. 4 cysteine pairs are disulfide-bonded: Cys13/Cys38, Cys23/Cys50, Cys27/Cys52, and Cys63/Cys71.

Belongs to the long (4 C-C) scorpion toxin superfamily. Sodium channel inhibitor family. Expressed by the venom gland.

The protein localises to the secreted. Its function is as follows. Sodium channel (Nav) specific neurotoxin. The sequence is that of Phaiodotoxin-2 from Anuroctonus phaiodactylus (Mafia scorpion).